We begin with the raw amino-acid sequence, 595 residues long: Adenine deaminase (595 aa).

This sequence belongs to the metallo-dependent hydrolases superfamily. Adenine deaminase family. In terms of assembly, homodimer. Requires Mn(2+) as cofactor.

It catalyses the reaction adenine + H2O + H(+) = hypoxanthine + NH4(+). This is Adenine deaminase from Serratia proteamaculans (strain 568).